Reading from the N-terminus, the 316-residue chain is CRISPR-associated endonuclease Cas1 (316 aa).

The Mn(2+) site is built by Glu143, His206, and Glu221.

It belongs to the CRISPR-associated endonuclease Cas1 family. As to quaternary structure, homodimer, forms a heterotetramer with a Cas2 homodimer. Mg(2+) serves as cofactor. Mn(2+) is required as a cofactor.

Functionally, CRISPR (clustered regularly interspaced short palindromic repeat), is an adaptive immune system that provides protection against mobile genetic elements (viruses, transposable elements and conjugative plasmids). CRISPR clusters contain spacers, sequences complementary to antecedent mobile elements, and target invading nucleic acids. CRISPR clusters are transcribed and processed into CRISPR RNA (crRNA). Acts as a dsDNA endonuclease. Involved in the integration of spacer DNA into the CRISPR cassette. This Aquifex aeolicus (strain VF5) protein is CRISPR-associated endonuclease Cas1.